We begin with the raw amino-acid sequence, 374 residues long: F(420)H(2) dehydrogenase subunit D (374 aa).

This sequence belongs to the complex I 49 kDa subunit family. As to quaternary structure, the FPO complex is composed of at least 13 different subunits.

Its subcellular location is the cell inner membrane. It catalyses the reaction methanophenazine + reduced coenzyme F420-(gamma-L-Glu)(n) = dihydromethanophenazine + oxidized coenzyme F420-(gamma-L-Glu)(n) + H(+). In terms of biological role, component of the F(420)H(2) dehydrogenase (FPO complex) which is part of the energy-conserving F(420)H(2):heterodisulfide oxidoreductase system. The membrane-bound electron transfer system of the complex plays an important role in the metabolism of methylotrophic methanogens when the organisms grow on methanol or methylamines. Catalyzes the oxidation of methanophenazine to dihydromethanophenazine. It shuttles electrons from F(420)H(2), via FAD and iron-sulfur (Fe-S) centers, to methanophenazine (an electron carrier in the membrane). It couples the redox reaction to proton translocation (for every two electrons transferred, two hydrogen ions are translocated across the cytoplasmic membrane), and thus conserves the redox energy in a proton gradient. It also catalyzes the oxidation of F(420)H(2) with quinones such as 2,3-dimethyl-1,4-naphthoquinone, 2-methyl-1,4-naphthoquinone and tetramethyl-p-benzoquinone. This chain is F(420)H(2) dehydrogenase subunit D (fpoD), found in Methanosarcina mazei (strain ATCC BAA-159 / DSM 3647 / Goe1 / Go1 / JCM 11833 / OCM 88) (Methanosarcina frisia).